The following is a 391-amino-acid chain: Fructose-bisphosphate aldolase 3, chloroplastic (391 aa).

The N-terminal 40 residues, 1 to 40, are a transit peptide targeting the chloroplast; it reads MASASFVKPNTLSSPWIGQRSFAHTSASSSPPPRVSFAIR. Arg-88 provides a ligand contact to substrate. Residue Ser-150 is modified to Phosphoserine. Lys-178 is a substrate binding site. Ser-208 is subject to Phosphoserine. The active-site Proton acceptor is the Glu-218. The active-site Schiff-base intermediate with dihydroxyacetone-P is the Lys-260. 302–304 is a binding site for substrate; sequence SGG. Position 387 is an N6,N6,N6-trimethyllysine (Lys-387).

This sequence belongs to the class I fructose-bisphosphate aldolase family. In terms of assembly, homotetramer. Post-translationally, can be trimethylated at Lys-387 by LSMT-L, but the trimethylation has no effect in vitro. S-glutathionylated. Expressed in roots, and at low levels in rosettes leaves, cauline leaves, stems and flowers.

It localises to the plastid. The protein resides in the chloroplast. It is found in the plastoglobule. It carries out the reaction beta-D-fructose 1,6-bisphosphate = D-glyceraldehyde 3-phosphate + dihydroxyacetone phosphate. It participates in carbohydrate degradation; glycolysis; D-glyceraldehyde 3-phosphate and glycerone phosphate from D-glucose: step 4/4. In terms of biological role, plays a key role in glycolysis and gluconeogenesis. In Arabidopsis thaliana (Mouse-ear cress), this protein is Fructose-bisphosphate aldolase 3, chloroplastic.